We begin with the raw amino-acid sequence, 156 residues long: Phosphopantetheine adenylyltransferase (156 aa).

It belongs to the eukaryotic CoaD family.

It localises to the cytoplasm. The catalysed reaction is (R)-4'-phosphopantetheine + ATP + H(+) = 3'-dephospho-CoA + diphosphate. It functions in the pathway cofactor biosynthesis; coenzyme A biosynthesis. Reversibly transfers an adenylyl group from ATP to 4'-phosphopantetheine, yielding dephospho-CoA (dPCoA) and pyrophosphate. The polypeptide is Phosphopantetheine adenylyltransferase (Methanosarcina acetivorans (strain ATCC 35395 / DSM 2834 / JCM 12185 / C2A)).